Consider the following 554-residue polypeptide: Solute carrier family 22 member 22 (554 aa).

Topologically, residues 1–15 (MDFDEILHHVGDSGR) are cytoplasmic. The helical transmembrane segment at 16 to 36 (FQICMIILLNILSLVLSPHDV) threads the bilayer. Residues 37–144 (LENFTAAIPA…DLVCDFQSFK (108 aa)) lie on the Extracellular side of the membrane. Asn-39 carries an N-linked (GlcNAc...) asparagine glycan. A helical membrane pass occupies residues 145–165 (YYAQATSLAGHLVSCPLSGII). The Cytoplasmic segment spans residues 166-172 (SDRFGRK). A helical transmembrane segment spans residues 173–193 (PLLMYCSLAYGAVGTYCAFAP). An N-linked (GlcNAc...) asparagine glycan is attached at Asn-194. Over 194–199 (NFSVYC) the chain is Extracellular. The helical transmembrane segment at 200-220 (VLRFLLSAFQSTILINSLILV) threads the bilayer. Over 221 to 231 (LEEASVQWHPT) the chain is Cytoplasmic. Residues 232–252 (IIVLSGLFNSIGQGVLGGLAY) form a helical membrane-spanning segment. The Extracellular portion of the chain corresponds to 253–258 (VISDWH). The chain crosses the membrane as a helical span at residues 259–279 (LLQLAYALPFFIFFVLFCWVP). Residues 280–347 (ESVRWLIITG…DIFINPLIRK (68 aa)) are Cytoplasmic-facing. A helical membrane pass occupies residues 348–368 (IVLSNSSLLFAELFSFVGLLL). Topologically, residues 369-376 (DVQLLGKN) are extracellular. Residues 377–397 (MFLTQIFLGAIDVPSKSLTYF) traverse the membrane as a helical segment. Residues 398-405 (TIRNVSRR) are Cytoplasmic-facing. A helical transmembrane segment spans residues 406–426 (PLIAFLLLTTGSCITITIFIS). The Extracellular segment spans residues 427–434 (EEMYVLRT). Residues 435–455 (IIFILGKGCFAAFTCISTTYI) form a helical membrane-spanning segment. The Cytoplasmic segment spans residues 456–466 (NELSPVELRST). Residues 467–487 (LNGVFLAVVRLAGVLSALTLA) traverse the membrane as a helical segment. Topologically, residues 488-491 (TRKY) are extracellular. Residues 492–512 (FVYLPMILYGVLPIVATISIL) form a helical membrane-spanning segment. Residues 513–554 (FLPETFNLPHTDIIKDMEKRKRLMSKNISKKEGQDFLETTEC) lie on the Cytoplasmic side of the membrane.

This sequence belongs to the major facilitator (TC 2.A.1) superfamily. Organic cation transporter (TC 2.A.1.19) family. As to expression, specifically expressed in kidney where it is found in proximal convoluted tubules (at protein level). Colocalizes with the prostaglandin-inactivating enzyme HPGD in kidney (at protein level). Not detected in other tissues tested.

It localises to the basolateral cell membrane. Sodium-independent organic anion transporter which exhibits high specificity for a subset of prostaglandins including prostaglandin E2 (PGE2), prostaglandin E1 (PGE1), prostaglandin F2-alpha (PGF2-alpha) and prostaglandin D2 (PGD2). The protein is Solute carrier family 22 member 22 of Mus musculus (Mouse).